Here is a 947-residue protein sequence, read N- to C-terminus: Protocadherin alpha-4 (947 aa).

The signal sequence occupies residues M1–G29. Cadherin domains follow at residues Q30–F133, P134–F242, D243–L350, E351–F455, A456–L565, and G588–A678. The Extracellular segment spans residues Q30–N697. A disulfide bridge links C96 with C102. Residues N139, N257, and N265 are each glycosylated (N-linked (GlcNAc...) asparagine). The N-linked (GlcNAc...) asparagine glycan is linked to N548. Residues V698 to Y718 traverse the membrane as a helical segment. The Cytoplasmic segment spans residues T719–Q947. PXXP repeat units lie at residues P734–P737, P774–P777, P796–P799, P829–P832, P870–P873, and P888–P891. A 6 X 4 AA repeats of P-X-X-P region spans residues P734–P891. Residues T738–Q947 are required for interaction with FYN. Disordered stretches follow at residues R754 to Y805, G828 to P853, and Y868 to Q947. Residues D906–K920 are compositionally biased toward basic and acidic residues.

As to quaternary structure, forms homodimers in trans (molecules expressed by two different cells). Forms promiscuous heterodimers in cis (at the plasma membrane of the same cell) with other protocadherins. Interacts with FYN.

The protein resides in the cell membrane. Its function is as follows. Calcium-dependent cell-adhesion protein involved in cells self-recognition and non-self discrimination. Thereby, it is involved in the establishment and maintenance of specific neuronal connections in the brain. This chain is Protocadherin alpha-4, found in Homo sapiens (Human).